The sequence spans 248 residues: Ureidoacrylate amidohydrolase RutB (248 aa).

The Proton acceptor role is filled by Asp-41. Lys-150 is a catalytic residue. Cys-183 (nucleophile) is an active-site residue.

This sequence belongs to the isochorismatase family. RutB subfamily.

It carries out the reaction (Z)-3-ureidoacrylate + H2O + H(+) = (Z)-3-aminoacrylate + NH4(+) + CO2. The enzyme catalyses (Z)-3-ureidoacrylate + H2O = (Z)-3-aminoacrylate + carbamate + H(+). The catalysed reaction is (Z)-2-methylureidoacrylate + H2O + H(+) = (Z)-2-methylaminoacrylate + NH4(+) + CO2. In terms of biological role, hydrolyzes ureidoacrylate to form aminoacrylate and carbamate. The carbamate hydrolyzes spontaneously, thereby releasing one of the nitrogen atoms of the pyrimidine ring as ammonia and one of its carbon atoms as CO2. The sequence is that of Ureidoacrylate amidohydrolase RutB from Methylorubrum extorquens (strain DSM 6343 / CIP 106787 / DM4) (Methylobacterium extorquens).